Here is a 96-residue protein sequence, read N- to C-terminus: Aspartyl/glutamyl-tRNA(Asn/Gln) amidotransferase subunit C (96 aa).

A disordered region spans residues 64 to 96 (REDEPEPGLPREEVLKNAPDQQDGQFRVPAILE).

This sequence belongs to the GatC family. In terms of assembly, heterotrimer of A, B and C subunits.

It carries out the reaction L-glutamyl-tRNA(Gln) + L-glutamine + ATP + H2O = L-glutaminyl-tRNA(Gln) + L-glutamate + ADP + phosphate + H(+). The enzyme catalyses L-aspartyl-tRNA(Asn) + L-glutamine + ATP + H2O = L-asparaginyl-tRNA(Asn) + L-glutamate + ADP + phosphate + 2 H(+). Functionally, allows the formation of correctly charged Asn-tRNA(Asn) or Gln-tRNA(Gln) through the transamidation of misacylated Asp-tRNA(Asn) or Glu-tRNA(Gln) in organisms which lack either or both of asparaginyl-tRNA or glutaminyl-tRNA synthetases. The reaction takes place in the presence of glutamine and ATP through an activated phospho-Asp-tRNA(Asn) or phospho-Glu-tRNA(Gln). The chain is Aspartyl/glutamyl-tRNA(Asn/Gln) amidotransferase subunit C from Geobacillus thermodenitrificans (strain NG80-2).